The sequence spans 1305 residues: Contactin-associated protein like 5-4 (1305 aa).

The first 24 residues, 1–24 (MNSVRRLNSILTLVLSGLWHLGLT), serve as a signal peptide directing secretion. At 25 to 1237 (ATNYNCDEPL…LTDTVQSDSA (1213 aa)) the chain is on the extracellular side. Residues 30–174 (CDEPLASFLS…IGMRVEVYGC (145 aa)) enclose the F5/8 type C domain. A disulfide bridge connects residues C30 and C174. 2 consecutive Laminin G-like domains span residues 180–360 (IVGF…TFSC) and 367–544 (PITF…IDLC). The N-linked (GlcNAc...) asparagine glycan is linked to N282. A disulfide bridge links C329 with C360. N496 is a glycosylation site (N-linked (GlcNAc...) asparagine). 3 cysteine pairs are disulfide-bonded: C512/C544, C550/C561, and C555/C570. In terms of domain architecture, EGF-like 1 spans 546-583 (IKDRCLPNYCEHGGHCAQNWTTFYCNCSDTGYTGATCH). The N-linked (GlcNAc...) asparagine glycan is linked to N571. C572 and C582 form a disulfide bridge. The Fibrinogen C-terminal domain occupies 584–790 (DSVYEQSCEV…LRCYGDRHFW (207 aa)). N622 carries an N-linked (GlcNAc...) asparagine glycan. Residues 791–956 (NAVSFTTEAS…KLMSGVTPGC (166 aa)) form the Laminin G-like 3 domain. 4 cysteine pairs are disulfide-bonded: C929–C956, C960–C973, C967–C982, and C984–C994. Positions 957-995 (LGHCSSYGSNCLNGGKCVEKQSGYSCDCTNSPNEGPFCQ) constitute an EGF-like 2 domain. The 185-residue stretch at 1014-1198 (EPYLVIKNTS…VQGTLTESGC (185 aa)) folds into the Laminin G-like 4 domain. N-linked (GlcNAc...) asparagine glycosylation occurs at N1057. Cysteines 1163 and 1198 form a disulfide. Residues 1238–1258 (VIGGIIALVTFVTFCVIGIMI) form a helical membrane-spanning segment. Topologically, residues 1259–1305 (HFLYLHKQSHCTNQTKEKEYSENLSNSFRNAIDLQNTASECKREYFI) are cytoplasmic.

Belongs to the neurexin family.

It localises to the membrane. May play a role in the correct development and proper functioning of the peripheral and central nervous system and be involved in cell adhesion and intercellular communication. The chain is Contactin-associated protein like 5-4 (Cntnap5d) from Rattus norvegicus (Rat).